A 115-amino-acid chain; its full sequence is Large ribosomal subunit protein bL20c (115 aa).

The protein belongs to the bacterial ribosomal protein bL20 family.

The protein localises to the plastid. The protein resides in the chloroplast. Its function is as follows. Binds directly to 23S ribosomal RNA and is necessary for the in vitro assembly process of the 50S ribosomal subunit. It is not involved in the protein synthesizing functions of that subunit. The protein is Large ribosomal subunit protein bL20c of Pleurastrum terricola (Filamentous green alga).